A 426-amino-acid polypeptide reads, in one-letter code: Histidine--tRNA ligase (426 aa).

It belongs to the class-II aminoacyl-tRNA synthetase family. Homodimer.

The protein localises to the cytoplasm. The catalysed reaction is tRNA(His) + L-histidine + ATP = L-histidyl-tRNA(His) + AMP + diphosphate + H(+). The protein is Histidine--tRNA ligase of Streptococcus pyogenes serotype M5 (strain Manfredo).